We begin with the raw amino-acid sequence, 188 residues long: Elongation factor P-like protein (188 aa).

Belongs to the elongation factor P family.

This is Elongation factor P-like protein from Saccharophagus degradans (strain 2-40 / ATCC 43961 / DSM 17024).